The sequence spans 424 residues: Enolase (424 aa).

(2R)-2-phosphoglycerate is bound at residue glutamine 163. Glutamate 205 acts as the Proton donor in catalysis. Positions 242, 285, and 312 each coordinate Mg(2+). Positions 337, 366, 367, and 388 each coordinate (2R)-2-phosphoglycerate. Residue lysine 337 is the Proton acceptor of the active site.

This sequence belongs to the enolase family. It depends on Mg(2+) as a cofactor.

It is found in the cytoplasm. It localises to the secreted. The protein resides in the cell surface. The enzyme catalyses (2R)-2-phosphoglycerate = phosphoenolpyruvate + H2O. Its pathway is carbohydrate degradation; glycolysis; pyruvate from D-glyceraldehyde 3-phosphate: step 4/5. Functionally, catalyzes the reversible conversion of 2-phosphoglycerate (2-PG) into phosphoenolpyruvate (PEP). It is essential for the degradation of carbohydrates via glycolysis. This is Enolase from Dinoroseobacter shibae (strain DSM 16493 / NCIMB 14021 / DFL 12).